The primary structure comprises 352 residues: Gamma-aminobutyric acid-binding protein (352 aa).

The first 28 residues, 1-28 (MFKSLHQYAHVFSRLSLFGLAFAAAAQA), serve as a signal peptide directing secretion.

It belongs to the bacterial solute-binding protein 1 family.

Its subcellular location is the periplasm. Its function is as follows. Binds specifically gamma-aminobutyric acid (GABA) with nanomolar affinity. Does not bind structurally related compounds such as 4-aminovaleric acid, spermidine, histamine and butyric acid. The sequence is that of Gamma-aminobutyric acid-binding protein from Pseudomonas aeruginosa (strain ATCC 15692 / DSM 22644 / CIP 104116 / JCM 14847 / LMG 12228 / 1C / PRS 101 / PAO1).